Here is a 92-residue protein sequence, read N- to C-terminus: Small ribosomal subunit protein uS19 (92 aa).

It belongs to the universal ribosomal protein uS19 family.

Functionally, protein S19 forms a complex with S13 that binds strongly to the 16S ribosomal RNA. The sequence is that of Small ribosomal subunit protein uS19 from Acidiphilium cryptum (strain JF-5).